Here is a 97-residue protein sequence, read N- to C-terminus: Co-chaperonin GroES (97 aa).

This sequence belongs to the GroES chaperonin family. In terms of assembly, heptamer of 7 subunits arranged in a ring. Interacts with the chaperonin GroEL.

The protein resides in the cytoplasm. Its function is as follows. Together with the chaperonin GroEL, plays an essential role in assisting protein folding. The GroEL-GroES system forms a nano-cage that allows encapsulation of the non-native substrate proteins and provides a physical environment optimized to promote and accelerate protein folding. GroES binds to the apical surface of the GroEL ring, thereby capping the opening of the GroEL channel. The protein is Co-chaperonin GroES of Yersinia pseudotuberculosis serotype O:1b (strain IP 31758).